Reading from the N-terminus, the 34-residue chain is Chlorotoxin-like peptide AaCtx (34 aa).

4 disulfide bridges follow: Cys-2-Cys-19, Cys-5-Cys-27, Cys-16-Cys-32, and Cys-20-Cys-34.

This sequence belongs to the short scorpion toxin superfamily. Chloride channel inhibitor family. In terms of tissue distribution, expressed by the venom gland.

The protein resides in the secreted. Functionally, toxin with unknown function in healthy organisms. On glioma cells, interacts with chloride channels (probably ClC-3/CLCN3) and MMP2 at the surface of glioma cells. This complex is then internalized via caveolae, thus inhibiting the chloride channels necessary for cell shrinkage and tumor propagation. Inhibits migration and invasion of U87 glioma cells expressing CLCN3/ClC-3 voltage-gated chloride channels. The polypeptide is Chlorotoxin-like peptide AaCtx (Androctonus australis (Sahara scorpion)).